Consider the following 239-residue polypeptide: Eukaryotic translation initiation factor 6 (239 aa).

The protein belongs to the eIF-6 family. As to quaternary structure, monomer. Associates with the 60S ribosomal subunit.

Its subcellular location is the cytoplasm. The protein localises to the nucleus. The protein resides in the nucleolus. Functionally, binds to the 60S ribosomal subunit and prevents its association with the 40S ribosomal subunit to form the 80S initiation complex in the cytoplasm. May also be involved in ribosome biogenesis. This is Eukaryotic translation initiation factor 6 from Entamoeba dispar (strain ATCC PRA-260 / SAW760).